Reading from the N-terminus, the 83-residue chain is Hainantoxin-III 8 (83 aa).

The first 21 residues, 1-21 (MKASMFLALAGLVLLFVVGYA), serve as a signal peptide directing secretion. Positions 22 to 48 (SESEEKEFPRELLSKIFAVDDFTGEER) are excised as a propeptide. Cystine bridges form between Cys-50-Cys-65, Cys-57-Cys-70, and Cys-64-Cys-77. Position 81 is a leucine amide (Leu-81).

This sequence belongs to the neurotoxin 10 (Hwtx-1) family. 15 (Hntx-3) subfamily. In terms of assembly, monomer. Expressed by the venom gland.

The protein localises to the secreted. Its function is as follows. Selective antagonist of neuronal tetrodotoxin (TTX)-sensitive voltage-gated sodium channels (IC(50)=1270 nM on Nav1.1/SCN1A, 270 nM on Nav1.2/SCN2A, 491 nM on Nav1.3/SCN3A and 232 nM on Nav1.7/SCN9A). This toxin suppress Nav1.7 current amplitude without significantly altering the activation, inactivation, and repriming kinetics. Short extreme depolarizations partially activate the toxin-bound channel, indicating voltage-dependent inhibition of this toxin. This toxin increases the deactivation of the Nav1.7 current after extreme depolarizations. The toxin-Nav1.7 complex is gradually dissociated upon prolonged strong depolarizations in a voltage-dependent manner, and the unbound toxin rebinds to Nav1.7 after a long repolarization. Moreover, analysis of chimeric channels showed that the DIIS3-S4 linker is critical for toxin binding to Nav1.7. These data are consistent with this toxin interacting with Nav1.7 site 4 and trapping the domain II voltage sensor in the closed state. In Cyriopagopus hainanus (Chinese bird spider), this protein is Hainantoxin-III 8.